We begin with the raw amino-acid sequence, 347 residues long: Phenylalanine--tRNA ligase alpha subunit (347 aa).

Glutamate 259 is a Mg(2+) binding site.

Belongs to the class-II aminoacyl-tRNA synthetase family. Phe-tRNA synthetase alpha subunit type 1 subfamily. Tetramer of two alpha and two beta subunits. Mg(2+) serves as cofactor.

The protein resides in the cytoplasm. The catalysed reaction is tRNA(Phe) + L-phenylalanine + ATP = L-phenylalanyl-tRNA(Phe) + AMP + diphosphate + H(+). The polypeptide is Phenylalanine--tRNA ligase alpha subunit (Oenococcus oeni (strain ATCC BAA-331 / PSU-1)).